The chain runs to 233 residues: Putative 26S proteasome non-ATPase regulatory subunit 8 homolog B (233 aa).

Residue Met1 is modified to N-acetylmethionine. A PCI domain is found at Asp38–Gln217.

It belongs to the proteasome subunit S14 family. As to quaternary structure, component of the 19S regulatory particle (RP/PA700) lid subcomplex of the 26S proteasome. The 26S proteasome is composed of a core protease (CP), known as the 20S proteasome, capped at one or both ends by the 19S regulatory particle (RP/PA700). The RP/PA700 complex is composed of at least 17 different subunits in two subcomplexes, the base and the lid, which form the portions proximal and distal to the 20S proteolytic core, respectively. Interacts with UCH1 and UCH2.

In terms of biological role, acts as a regulatory subunit of the 26S proteasome which is involved in the ATP-dependent degradation of ubiquitinated proteins. This is Putative 26S proteasome non-ATPase regulatory subunit 8 homolog B from Arabidopsis thaliana (Mouse-ear cress).